The primary structure comprises 742 residues: Phosphoribosylformylglycinamidine synthase subunit PurL (742 aa).

The active site involves H53. 2 residues coordinate ATP: Y56 and K95. Position 97 (E97) interacts with Mg(2+). Residues 98 to 101 (SHNH) and R120 each bind substrate. The Proton acceptor role is filled by H99. Mg(2+) is bound at residue D121. Q244 contacts substrate. D274 contributes to the Mg(2+) binding site. A substrate-binding site is contributed by 318-320 (ESQ). 2 residues coordinate ATP: D501 and G538. Mg(2+) is bound at residue N539. S541 is a binding site for substrate.

It belongs to the FGAMS family. In terms of assembly, monomer. Part of the FGAM synthase complex composed of 1 PurL, 1 PurQ and 2 PurS subunits.

It localises to the cytoplasm. The catalysed reaction is N(2)-formyl-N(1)-(5-phospho-beta-D-ribosyl)glycinamide + L-glutamine + ATP + H2O = 2-formamido-N(1)-(5-O-phospho-beta-D-ribosyl)acetamidine + L-glutamate + ADP + phosphate + H(+). Its pathway is purine metabolism; IMP biosynthesis via de novo pathway; 5-amino-1-(5-phospho-D-ribosyl)imidazole from N(2)-formyl-N(1)-(5-phospho-D-ribosyl)glycinamide: step 1/2. Its function is as follows. Part of the phosphoribosylformylglycinamidine synthase complex involved in the purines biosynthetic pathway. Catalyzes the ATP-dependent conversion of formylglycinamide ribonucleotide (FGAR) and glutamine to yield formylglycinamidine ribonucleotide (FGAM) and glutamate. The FGAM synthase complex is composed of three subunits. PurQ produces an ammonia molecule by converting glutamine to glutamate. PurL transfers the ammonia molecule to FGAR to form FGAM in an ATP-dependent manner. PurS interacts with PurQ and PurL and is thought to assist in the transfer of the ammonia molecule from PurQ to PurL. In Limosilactobacillus reuteri (strain DSM 20016) (Lactobacillus reuteri), this protein is Phosphoribosylformylglycinamidine synthase subunit PurL.